A 111-amino-acid chain; its full sequence is Antitoxin PrlF (111 aa).

The SpoVT-AbrB domain maps to 12–59 (TTESKVTIRGQTTIPAPVREALKLKPGLDSIHYEILPGGQVFMCRLGD).

As to quaternary structure, homodimer; forms a complex with YhaV with stoichiometry PrlF(2)-YhaV(4), possibly as a YhaV(2)-PrlF(2)-YhaV(2) complex like the MazFE complex.

The protein resides in the cytoplasm. Antitoxin component of a type II toxin-antitoxin (TA) system. Labile antitoxin that binds to the YhaV toxin and neutralizes its ribonuclease activity. Also acts as a transcription factor. The YhaV/PrlF complex binds the prlF-yhaV operon, probably negatively regulating its expression. The sequence is that of Antitoxin PrlF (prlF) from Escherichia coli O6:H1 (strain CFT073 / ATCC 700928 / UPEC).